We begin with the raw amino-acid sequence, 214 residues long: tRNA (guanine-N(7)-)-methyltransferase (214 aa).

S-adenosyl-L-methionine is bound by residues D35, E60, N87, and D113. Residue D113 is part of the active site. K117 and D149 together coordinate substrate.

Belongs to the class I-like SAM-binding methyltransferase superfamily. TrmB family.

The catalysed reaction is guanosine(46) in tRNA + S-adenosyl-L-methionine = N(7)-methylguanosine(46) in tRNA + S-adenosyl-L-homocysteine. It participates in tRNA modification; N(7)-methylguanine-tRNA biosynthesis. Its function is as follows. Catalyzes the formation of N(7)-methylguanine at position 46 (m7G46) in tRNA. In Prochlorococcus marinus (strain NATL2A), this protein is tRNA (guanine-N(7)-)-methyltransferase.